Here is a 392-residue protein sequence, read N- to C-terminus: Chaperone protein DnaJ (392 aa).

Positions 5-75 (DYYEVLGIDK…QKKQQYDQFG (71 aa)) constitute a J domain. The CR-type zinc finger occupies 148 to 229 (GVEKTIKYKR…CHGTGTAKET (82 aa)). Positions 161, 164, 177, 180, 203, 206, 217, and 220 each coordinate Zn(2+). CXXCXGXG motif repeat units follow at residues 161 to 168 (CENCHGTG), 177 to 184 (CPTCNGQG), 203 to 210 (CPDCHGTG), and 217 to 224 (CKHCHGTG).

This sequence belongs to the DnaJ family. In terms of assembly, homodimer. The cofactor is Zn(2+).

It is found in the cytoplasm. In terms of biological role, participates actively in the response to hyperosmotic and heat shock by preventing the aggregation of stress-denatured proteins and by disaggregating proteins, also in an autonomous, DnaK-independent fashion. Unfolded proteins bind initially to DnaJ; upon interaction with the DnaJ-bound protein, DnaK hydrolyzes its bound ATP, resulting in the formation of a stable complex. GrpE releases ADP from DnaK; ATP binding to DnaK triggers the release of the substrate protein, thus completing the reaction cycle. Several rounds of ATP-dependent interactions between DnaJ, DnaK and GrpE are required for fully efficient folding. Also involved, together with DnaK and GrpE, in the DNA replication of plasmids through activation of initiation proteins. This is Chaperone protein DnaJ from Fusobacterium nucleatum subsp. nucleatum (strain ATCC 25586 / DSM 15643 / BCRC 10681 / CIP 101130 / JCM 8532 / KCTC 2640 / LMG 13131 / VPI 4355).